Consider the following 152-residue polypeptide: 3-hydroxyacyl-[acyl-carrier-protein] dehydratase FabZ (152 aa).

The active site involves H58.

It belongs to the thioester dehydratase family. FabZ subfamily.

The protein localises to the cytoplasm. It carries out the reaction a (3R)-hydroxyacyl-[ACP] = a (2E)-enoyl-[ACP] + H2O. Involved in unsaturated fatty acids biosynthesis. Catalyzes the dehydration of short chain beta-hydroxyacyl-ACPs and long chain saturated and unsaturated beta-hydroxyacyl-ACPs. The polypeptide is 3-hydroxyacyl-[acyl-carrier-protein] dehydratase FabZ (Prochlorococcus marinus (strain MIT 9515)).